The following is a 611-amino-acid chain: Dihydroxy-acid dehydratase (611 aa).

Asp-81 is a binding site for Mg(2+). Cys-122 is a binding site for [2Fe-2S] cluster. Residues Asp-123 and Lys-124 each contribute to the Mg(2+) site. Lys-124 is subject to N6-carboxylysine. Cys-195 contacts [2Fe-2S] cluster. Position 491 (Glu-491) interacts with Mg(2+). The Proton acceptor role is filled by Ser-517.

It belongs to the IlvD/Edd family. Homodimer. [2Fe-2S] cluster serves as cofactor. The cofactor is Mg(2+).

The enzyme catalyses (2R)-2,3-dihydroxy-3-methylbutanoate = 3-methyl-2-oxobutanoate + H2O. It catalyses the reaction (2R,3R)-2,3-dihydroxy-3-methylpentanoate = (S)-3-methyl-2-oxopentanoate + H2O. It participates in amino-acid biosynthesis; L-isoleucine biosynthesis; L-isoleucine from 2-oxobutanoate: step 3/4. It functions in the pathway amino-acid biosynthesis; L-valine biosynthesis; L-valine from pyruvate: step 3/4. In terms of biological role, functions in the biosynthesis of branched-chain amino acids. Catalyzes the dehydration of (2R,3R)-2,3-dihydroxy-3-methylpentanoate (2,3-dihydroxy-3-methylvalerate) into 2-oxo-3-methylpentanoate (2-oxo-3-methylvalerate) and of (2R)-2,3-dihydroxy-3-methylbutanoate (2,3-dihydroxyisovalerate) into 2-oxo-3-methylbutanoate (2-oxoisovalerate), the penultimate precursor to L-isoleucine and L-valine, respectively. The chain is Dihydroxy-acid dehydratase from Allorhizobium ampelinum (strain ATCC BAA-846 / DSM 112012 / S4) (Agrobacterium vitis (strain S4)).